The sequence spans 365 residues: Histidinol-phosphate aminotransferase (365 aa).

The residue at position 221 (Lys221) is an N6-(pyridoxal phosphate)lysine.

This sequence belongs to the class-II pyridoxal-phosphate-dependent aminotransferase family. Histidinol-phosphate aminotransferase subfamily. In terms of assembly, homodimer. It depends on pyridoxal 5'-phosphate as a cofactor.

It catalyses the reaction L-histidinol phosphate + 2-oxoglutarate = 3-(imidazol-4-yl)-2-oxopropyl phosphate + L-glutamate. It participates in amino-acid biosynthesis; L-histidine biosynthesis; L-histidine from 5-phospho-alpha-D-ribose 1-diphosphate: step 7/9. The protein is Histidinol-phosphate aminotransferase of Nitrobacter hamburgensis (strain DSM 10229 / NCIMB 13809 / X14).